The chain runs to 213 residues: Thymidine kinase (213 aa).

Residues 20–27 (GPMFSGKT) and 93–96 (DEAQ) each bind ATP. Catalysis depends on Glu-94, which acts as the Proton acceptor. Zn(2+)-binding residues include Cys-150, Cys-153, Cys-185, and His-188.

It belongs to the thymidine kinase family. As to quaternary structure, homotetramer.

The protein resides in the cytoplasm. It catalyses the reaction thymidine + ATP = dTMP + ADP + H(+). This chain is Thymidine kinase, found in Mycoplasma genitalium (strain ATCC 33530 / DSM 19775 / NCTC 10195 / G37) (Mycoplasmoides genitalium).